The following is a 129-amino-acid chain: MEEFDVDLDFGGAGHTDDGDGLVAVIAQDADSRDVLMLAYATREAVARTATTGRAHYYSRSRDELWEKGATSGNTQSVDEIRVDCDGDALLYLVAQTGGACHTGHESCFHRTLDGDTVGDQVFDPDDAY.

Asp84 serves as a coordination point for Mg(2+). Cys85 provides a ligand contact to Zn(2+). Mg(2+)-binding residues include Asp86 and Asp88. Zn(2+)-binding residues include Cys101 and Cys108.

It belongs to the PRA-CH family. As to quaternary structure, homodimer. Requires Mg(2+) as cofactor. Zn(2+) serves as cofactor.

The protein localises to the cytoplasm. It catalyses the reaction 1-(5-phospho-beta-D-ribosyl)-5'-AMP + H2O = 1-(5-phospho-beta-D-ribosyl)-5-[(5-phospho-beta-D-ribosylamino)methylideneamino]imidazole-4-carboxamide. It functions in the pathway amino-acid biosynthesis; L-histidine biosynthesis; L-histidine from 5-phospho-alpha-D-ribose 1-diphosphate: step 3/9. In terms of biological role, catalyzes the hydrolysis of the adenine ring of phosphoribosyl-AMP. The polypeptide is Phosphoribosyl-AMP cyclohydrolase (Halobacterium salinarum (strain ATCC 700922 / JCM 11081 / NRC-1) (Halobacterium halobium)).